Consider the following 328-residue polypeptide: GMP reductase (328 aa).

The active-site Thioimidate intermediate is Cys176. Ile205–Ile228 provides a ligand contact to NADP(+).

The protein belongs to the IMPDH/GMPR family. GuaC type 2 subfamily.

The catalysed reaction is IMP + NH4(+) + NADP(+) = GMP + NADPH + 2 H(+). Functionally, catalyzes the irreversible NADPH-dependent deamination of GMP to IMP. It functions in the conversion of nucleobase, nucleoside and nucleotide derivatives of G to A nucleotides, and in maintaining the intracellular balance of A and G nucleotides. This Streptococcus pneumoniae (strain ATCC 700669 / Spain 23F-1) protein is GMP reductase.